We begin with the raw amino-acid sequence, 241 residues long: Pyridoxine 5'-phosphate synthase (241 aa).

Asn7 provides a ligand contact to 3-amino-2-oxopropyl phosphate. 9–10 (DH) is a 1-deoxy-D-xylulose 5-phosphate binding site. Arg18 contacts 3-amino-2-oxopropyl phosphate. Catalysis depends on His43, which acts as the Proton acceptor. The 1-deoxy-D-xylulose 5-phosphate site is built by Arg45 and His50. Glu70 (proton acceptor) is an active-site residue. Position 100 (Thr100) interacts with 1-deoxy-D-xylulose 5-phosphate. The active-site Proton donor is His191. Residues Gly192 and 213 to 214 (GH) each bind 3-amino-2-oxopropyl phosphate.

It belongs to the PNP synthase family. In terms of assembly, homooctamer; tetramer of dimers.

The protein localises to the cytoplasm. The catalysed reaction is 3-amino-2-oxopropyl phosphate + 1-deoxy-D-xylulose 5-phosphate = pyridoxine 5'-phosphate + phosphate + 2 H2O + H(+). It functions in the pathway cofactor biosynthesis; pyridoxine 5'-phosphate biosynthesis; pyridoxine 5'-phosphate from D-erythrose 4-phosphate: step 5/5. Its function is as follows. Catalyzes the complicated ring closure reaction between the two acyclic compounds 1-deoxy-D-xylulose-5-phosphate (DXP) and 3-amino-2-oxopropyl phosphate (1-amino-acetone-3-phosphate or AAP) to form pyridoxine 5'-phosphate (PNP) and inorganic phosphate. This is Pyridoxine 5'-phosphate synthase from Solidesulfovibrio magneticus (strain ATCC 700980 / DSM 13731 / RS-1) (Desulfovibrio magneticus).